We begin with the raw amino-acid sequence, 121 residues long: Large ribosomal subunit protein bL12 (121 aa).

This sequence belongs to the bacterial ribosomal protein bL12 family. As to quaternary structure, homodimer. Part of the ribosomal stalk of the 50S ribosomal subunit. Forms a multimeric L10(L12)X complex, where L10 forms an elongated spine to which 2 to 4 L12 dimers bind in a sequential fashion. Binds GTP-bound translation factors.

Functionally, forms part of the ribosomal stalk which helps the ribosome interact with GTP-bound translation factors. Is thus essential for accurate translation. The chain is Large ribosomal subunit protein bL12 from Shewanella pealeana (strain ATCC 700345 / ANG-SQ1).